A 562-amino-acid polypeptide reads, in one-letter code: NAD-dependent malic enzyme (562 aa).

The Proton donor role is filled by tyrosine 101. Arginine 154 contacts NAD(+). Catalysis depends on lysine 172, which acts as the Proton acceptor. Glutamate 243, aspartate 244, and aspartate 267 together coordinate a divalent metal cation. Residues aspartate 267 and asparagine 415 each contribute to the NAD(+) site.

This sequence belongs to the malic enzymes family. As to quaternary structure, homotetramer. The cofactor is Mg(2+). Mn(2+) is required as a cofactor.

The catalysed reaction is (S)-malate + NAD(+) = pyruvate + CO2 + NADH. It catalyses the reaction oxaloacetate + H(+) = pyruvate + CO2. The protein is NAD-dependent malic enzyme of Shewanella sediminis (strain HAW-EB3).